The chain runs to 521 residues: Bifunctional purine biosynthesis protein PurH (521 aa).

One can recognise an MGS-like domain in the interval 1 to 145 (MIKQALISVS…KNHRDVTVVV (145 aa)).

This sequence belongs to the PurH family.

It carries out the reaction (6R)-10-formyltetrahydrofolate + 5-amino-1-(5-phospho-beta-D-ribosyl)imidazole-4-carboxamide = 5-formamido-1-(5-phospho-D-ribosyl)imidazole-4-carboxamide + (6S)-5,6,7,8-tetrahydrofolate. It catalyses the reaction IMP + H2O = 5-formamido-1-(5-phospho-D-ribosyl)imidazole-4-carboxamide. It participates in purine metabolism; IMP biosynthesis via de novo pathway; 5-formamido-1-(5-phospho-D-ribosyl)imidazole-4-carboxamide from 5-amino-1-(5-phospho-D-ribosyl)imidazole-4-carboxamide (10-formyl THF route): step 1/1. Its pathway is purine metabolism; IMP biosynthesis via de novo pathway; IMP from 5-formamido-1-(5-phospho-D-ribosyl)imidazole-4-carboxamide: step 1/1. This is Bifunctional purine biosynthesis protein PurH from Paraburkholderia xenovorans (strain LB400).